A 349-amino-acid polypeptide reads, in one-letter code: Small ribosomal subunit protein uS2 (349 aa).

The protein belongs to the universal ribosomal protein uS2 family.

The chain is Small ribosomal subunit protein uS2 from Methylocella silvestris (strain DSM 15510 / CIP 108128 / LMG 27833 / NCIMB 13906 / BL2).